The following is a 564-amino-acid chain: Kelch repeat and BTB domain-containing protein A55 (564 aa).

One can recognise a BTB domain in the interval 21 to 88; the sequence is CDISIVINDE…IYGIPLSLTN (68 aa). 6 Kelch repeats span residues 252–297, 298–346, 347–395, 397–441, 442–492, and 494–539; these read IELI…VLDN, IIYM…ADDE, YIYC…MLNG, IYVM…VHDG, KIYI…SAHN, and LYVG…CEPI.

Belongs to the poxviruses A55 protein family. Interacts (via BTB domain) with host CUL3.

It is found in the host cytoplasm. In terms of biological role, probable substrate-specific adapter of CUL3-containing E3 ubiquitin-protein ligases which mediate the ubiquitination and subsequent proteasomal degradation of host target proteins. This Bos taurus (Bovine) protein is Kelch repeat and BTB domain-containing protein A55 (KBTB1).